The primary structure comprises 306 residues: MTGSSDFPVKGLRGRLTPNAPLGPRAWFRVGGPADWLFVPEDQDDLALFLREKPATMPVTVLGACSNVIIRDGGIAGTVIRLARGFADITVQGNSLIVGAAALDITVAEHAAAAGLAGLEFLAGIPGSIGGAVRMNAGAYGSDINAVFEWADILTAEGELRRLSHDELGFAYRHSELPEGSVVIRASLRGTPDNADAIRSRIADIRASREASQPVRARTGGSTFRNPDGHKAWQLIDEAGCRGLQIGDAQVSEKHCNFLLNLGQASSADLETLGETVREKVLAQSGVDLHWEIKRIGRKSEGEQTV.

Positions R29–D193 constitute an FAD-binding PCMH-type domain. Residue R173 is part of the active site. S222 serves as the catalytic Proton donor. The active site involves E292.

The protein belongs to the MurB family. FAD serves as cofactor.

It localises to the cytoplasm. It catalyses the reaction UDP-N-acetyl-alpha-D-muramate + NADP(+) = UDP-N-acetyl-3-O-(1-carboxyvinyl)-alpha-D-glucosamine + NADPH + H(+). It participates in cell wall biogenesis; peptidoglycan biosynthesis. Functionally, cell wall formation. The sequence is that of UDP-N-acetylenolpyruvoylglucosamine reductase from Gluconobacter oxydans (strain 621H) (Gluconobacter suboxydans).